Consider the following 256-residue polypeptide: Hydroxyacylglutathione hydrolase (256 aa).

Zn(2+)-binding residues include histidine 55, histidine 57, aspartate 59, histidine 60, histidine 113, aspartate 130, and histidine 168.

It belongs to the metallo-beta-lactamase superfamily. Glyoxalase II family. In terms of assembly, monomer. It depends on Zn(2+) as a cofactor.

It catalyses the reaction an S-(2-hydroxyacyl)glutathione + H2O = a 2-hydroxy carboxylate + glutathione + H(+). The protein operates within secondary metabolite metabolism; methylglyoxal degradation; (R)-lactate from methylglyoxal: step 2/2. Its function is as follows. Thiolesterase that catalyzes the hydrolysis of S-D-lactoyl-glutathione to form glutathione and D-lactic acid. The polypeptide is Hydroxyacylglutathione hydrolase (Alkalilimnicola ehrlichii (strain ATCC BAA-1101 / DSM 17681 / MLHE-1)).